We begin with the raw amino-acid sequence, 246 residues long: MASVNVDFEQAGELKIGQVGIANLRVRTLDVPRLVQEMRERVTRAPKLFGRAAVILDFGGLSQVPDLATAKALLDGLHEAGVLPVALAYGTSEIDLLSQQLGVPLLAKFRAQYESAAVSPPPPPPARAEPAPPAARPAPGRMQRTAVRSGQQLYAENCDLTVLSTVGAGAEVIADGSIHIYGTLRGRALAGAQGNPDARIFCRDFHAELVAIAGNYKVLDDVPMDLRGKAVQVWLEQDQIKIAALD.

The segment at 116–140 is disordered; sequence AAVSPPPPPPARAEPAPPAARPAPG. The segment covering 119–136 has biased composition (pro residues); that stretch reads SPPPPPPARAEPAPPAAR.

Belongs to the MinC family. As to quaternary structure, interacts with MinD and FtsZ.

Functionally, cell division inhibitor that blocks the formation of polar Z ring septums. Rapidly oscillates between the poles of the cell to destabilize FtsZ filaments that have formed before they mature into polar Z rings. Prevents FtsZ polymerization. This chain is Probable septum site-determining protein MinC, found in Xanthomonas oryzae pv. oryzae (strain MAFF 311018).